Consider the following 528-residue polypeptide: Calcium-dependent protein kinase 4 (528 aa).

The disordered stretch occupies residues 1 to 36; the sequence is MGQEVSSVNNTKNEHHKTNKKSLKGGNERHEMKESS. The N-myristoyl glycine moiety is linked to residue glycine 2. The span at 14-23 shows a compositional bias: basic residues; sequence EHHKTNKKSL. In terms of domain architecture, Protein kinase spans 71 to 329; that stretch reads KGIKILGKGS…RDALEHEWIK (259 aa). ATP is bound by residues 76 to 84 and lysine 99; that span reads LGKGSFGEV. The active-site Proton acceptor is aspartate 193. The short motif at 350–358 is the J domain autoinhibitory motif element; it reads NIRQFQSTQ. The tract at residues 350 to 386 is j domain; the sequence is NIRQFQSTQKLAQAALLYMGSKLTTIDETKELTKIFK. The short motif at 359 to 368 is the J domain EF-hand interaction motif element; that stretch reads KLAQAALLYM. EF-hand domains lie at 376–411, 427–458, 459–494, and 496–528; these read DETKELTKIFKKMDKNGDGQLDRNELIIGYKELLKL, EVDQILNSIDLDQNGYIEYSEFLTVSIDRKLL, LSTERLEKAFKLFDKDGSGKISANELAQLFGLSDVS, and ECWKTVLKEVDQNNDGEIDFKEFRDMLVKLCNY. Residues aspartate 389, asparagine 391, aspartate 393, glutamine 395, glutamate 400, aspartate 436, aspartate 438, asparagine 440, tyrosine 442, glutamate 447, aspartate 472, aspartate 474, serine 476, lysine 478, glutamate 483, aspartate 506, asparagine 508, aspartate 510, glutamate 512, and glutamate 517 each coordinate Ca(2+).

It belongs to the protein kinase superfamily. Ser/Thr protein kinase family. CDPK subfamily. May interact with the pre-replication MCM complex prior male gametogenesis activation. The cofactor is Mg(2+). Post-translationally, myristoylated; myristoylation may target it to different subcellular compartments. During male gametogenesis, myristoylation is required to initiate DNA replication but not for mitotic spindle assembly or axoneme activation. In terms of processing, not palmitoylated. May be autophosphorylated on Thr-234 in vitro.

It is found in the cytoplasm. Its subcellular location is the cell membrane. It catalyses the reaction L-seryl-[protein] + ATP = O-phospho-L-seryl-[protein] + ADP + H(+). The enzyme catalyses L-threonyl-[protein] + ATP = O-phospho-L-threonyl-[protein] + ADP + H(+). With respect to regulation, activated by calcium. Upon calcium binding to the EF-hand domains, the C-terminus of the junction domain (J domain) undergoes a conformational change which results in the dissociation of the pseudo-substrate inhibitory motif from the catalytic domain. This, in turn, may facilitate the autophosphorylation of the activation loop at Thr-234, which leads to the kinase activation. Intracellular calcium increase is triggered by xanthurenic acid (XA), a small mosquito molecule that induces the differentiation of specialized transmission stages, the gametocytes, into male and female gametes. Activated by a decrease in temperature (20 degrees Celsius) and an increase in pH (7.6) occurring when the parasite is ingested by in the mosquito. Calcium-dependent protein kinase which acts as a sensor and effector of intracellular Ca(2+) levels probably in part downstream of cGMP-activated PKG kinase. Plays a central role in the host erythrocytes and hepatocytes infection cycles, sexual reproduction and mosquito transmission of the parasite. During the liver stage, involved in sporozoite motility and thus in sporozoite invasion of host hepatocytes, probably together with CDPK1 and CDPK5. Involved in merosome egress from host hepatocytes, probably together with CDPK5. During the asexual blood stage, involved in merozoite invasion of host erythrocytes and motility by stabilizing the inner membrane complex, a structure below the plasma membrane which acts as an anchor for the glidosome, an acto-myosin motor. Required for cell cycle progression in the male gametocyte. During male gametogenesis in the mosquito gut, required to initiate the first round of DNA replication, probably by facilitating the assembly of the pre-replicative MCM complex, to assemble the first mitotic spindle and, at the end of gametogenesis, to initiate axoneme motility, cytokinesis and subsequent exflagellation. For each of these steps, may phosphorylate SOC1, SOC2 and SOC3, respectively. Together with CDPK1, regulates ookinete gliding in the mosquito host midgut. This is Calcium-dependent protein kinase 4 from Plasmodium falciparum (isolate 3D7).